A 311-amino-acid chain; its full sequence is Methionyl-tRNA formyltransferase (311 aa).

110–113 (SLLP) is a (6S)-5,6,7,8-tetrahydrofolate binding site.

It belongs to the Fmt family.

The catalysed reaction is L-methionyl-tRNA(fMet) + (6R)-10-formyltetrahydrofolate = N-formyl-L-methionyl-tRNA(fMet) + (6S)-5,6,7,8-tetrahydrofolate + H(+). Functionally, attaches a formyl group to the free amino group of methionyl-tRNA(fMet). The formyl group appears to play a dual role in the initiator identity of N-formylmethionyl-tRNA by promoting its recognition by IF2 and preventing the misappropriation of this tRNA by the elongation apparatus. This chain is Methionyl-tRNA formyltransferase, found in Streptococcus sanguinis (strain SK36).